Consider the following 1551-residue polypeptide: Pentafunctional AROM polypeptide 2 (1551 aa).

The 3-dehydroquinate synthase stretch occupies residues 1 to 379; that stretch reads MSIEKVSILG…YESKAHQIFK (379 aa). NAD(+) is bound by residues 42 to 44, 80 to 83, 111 to 113, and Asp-116; these read DTN, ENHK, and GGV. Arg-127 lines the 7-phospho-2-dehydro-3-deoxy-D-arabino-heptonate pocket. 136-137 lines the NAD(+) pocket; sequence TT. Residues Asp-143 and Lys-149 each contribute to the 7-phospho-2-dehydro-3-deoxy-D-arabino-heptonate site. Residue Lys-158 coordinates NAD(+). Position 159 (Asn-159) interacts with 7-phospho-2-dehydro-3-deoxy-D-arabino-heptonate. NAD(+) is bound by residues 176 to 179 and Asn-187; that span reads FLQT. Glu-191 contacts Zn(2+). 7-phospho-2-dehydro-3-deoxy-D-arabino-heptonate is bound by residues 191–194 and Lys-243; that span reads EVVK. Catalysis depends on Glu-253, which acts as the Proton acceptor; for 3-dehydroquinate synthase activity. 7-phospho-2-dehydro-3-deoxy-D-arabino-heptonate-binding positions include 257 to 261 and His-264; that span reads RNLLN. His-264 contacts Zn(2+). His-268 functions as the Proton acceptor; for 3-dehydroquinate synthase activity in the catalytic mechanism. 2 residues coordinate 7-phospho-2-dehydro-3-deoxy-D-arabino-heptonate: His-280 and Lys-351. His-280 provides a ligand contact to Zn(2+). The interval 392 to 835 is EPSP synthase; it reads VHPFANRHPE…WDVLHSKFNA (444 aa). The shikimate kinase stretch occupies residues 854–1044; it reads DRSIVIIGMR…LPATRSTFVT (191 aa). 861–868 contributes to the ATP binding site; sequence GMRAAGKT. Residues 1045-1258 are 3-dehydroquinase; sequence LTYPDLRKVP…IGVGQLSLKE (214 aa). His-1162 (proton acceptor; for 3-dehydroquinate dehydratase activity) is an active-site residue. Lys-1191 acts as the Schiff-base intermediate with substrate; for 3-dehydroquinate dehydratase activity in catalysis. The interval 1271–1551 is shikimate dehydrogenase; it reads EKEFWVVGFP…KVIHSAVLNE (281 aa).

This sequence in the N-terminal section; belongs to the sugar phosphate cyclases superfamily. Dehydroquinate synthase family. It in the 2nd section; belongs to the EPSP synthase family. In the 3rd section; belongs to the shikimate kinase family. The protein in the 4th section; belongs to the type-I 3-dehydroquinase family. This sequence in the C-terminal section; belongs to the shikimate dehydrogenase family. As to quaternary structure, homodimer. Zn(2+) serves as cofactor.

Its subcellular location is the cytoplasm. The enzyme catalyses 7-phospho-2-dehydro-3-deoxy-D-arabino-heptonate = 3-dehydroquinate + phosphate. The catalysed reaction is 3-dehydroquinate = 3-dehydroshikimate + H2O. It carries out the reaction shikimate + NADP(+) = 3-dehydroshikimate + NADPH + H(+). It catalyses the reaction shikimate + ATP = 3-phosphoshikimate + ADP + H(+). The enzyme catalyses 3-phosphoshikimate + phosphoenolpyruvate = 5-O-(1-carboxyvinyl)-3-phosphoshikimate + phosphate. Its pathway is metabolic intermediate biosynthesis; chorismate biosynthesis; chorismate from D-erythrose 4-phosphate and phosphoenolpyruvate: step 2/7. It participates in metabolic intermediate biosynthesis; chorismate biosynthesis; chorismate from D-erythrose 4-phosphate and phosphoenolpyruvate: step 3/7. It functions in the pathway metabolic intermediate biosynthesis; chorismate biosynthesis; chorismate from D-erythrose 4-phosphate and phosphoenolpyruvate: step 4/7. The protein operates within metabolic intermediate biosynthesis; chorismate biosynthesis; chorismate from D-erythrose 4-phosphate and phosphoenolpyruvate: step 5/7. Its pathway is metabolic intermediate biosynthesis; chorismate biosynthesis; chorismate from D-erythrose 4-phosphate and phosphoenolpyruvate: step 6/7. The AROM polypeptide catalyzes 5 consecutive enzymatic reactions in prechorismate polyaromatic amino acid biosynthesis. The polypeptide is Pentafunctional AROM polypeptide 2 (Lodderomyces elongisporus (strain ATCC 11503 / CBS 2605 / JCM 1781 / NBRC 1676 / NRRL YB-4239) (Yeast)).